We begin with the raw amino-acid sequence, 709 residues long: Caprin-1 (709 aa).

Low complexity-rich tracts occupy residues 1–15 (MPSATSHSGSGSKSS) and 22–43 (GSSGSEAAAGAGAAAPASQHPA). Residues 1-50 (MPSATSHSGSGSKSSGPPPPSGSSGSEAAAGAGAAAPASQHPATGTGAVQ) are disordered. Residue Pro2 is modified to N-acetylproline. Pro2 carries the post-translational modification N-acetylalanine. Phosphoserine is present on Ser10. Residues 60–94 (VIDKKLRNLEKKKGKLDDYQERMNKGERLNQDQLD) adopt a coiled-coil conformation. Residue Ser115 is modified to Phosphoserine. Residues 125–153 (KTIKKTARREQLMREEAEQKRLKTVLELQ) are a coiled coil. At Arg165 the chain carries Omega-N-methylarginine. Positions 260–291 (EEAASAPAVEDQVPEAEPEPAEEYTEQSEVES) are disordered. Acidic residues predominate over residues 271-291 (QVPEAEPEPAEEYTEQSEVES). Phosphoserine occurs at positions 335 and 343. Residues 360–381 (QDLMAQMQGPYNFIQDSMLDFE) are G3BP1-binding. Disordered stretches follow at residues 417-446 (LAQPNQVPVQPEATQVPLVSSTSEGYTASQ), 475-499 (TDQTTASSSLPAASQPQVFQAGTSK), and 524-709 (APVP…QQVN). A compositionally biased stretch (polar residues) spans 433-446 (PLVSSTSEGYTASQ). Composition is skewed to low complexity over residues 477–491 (QTTASSSLPAASQPQ) and 537–570 (QQNQYQASYNQSFSSQPHQVEQTELQQEQLQTVV). Residues 577 to 605 (PDQSHQVTGNHQQPPQQNTGFPRSNQPYY) are compositionally biased toward polar residues. Tyr625 carries the phosphotyrosine; by EPHA4 modification. Residues Arg626 and Arg633 each carry the omega-N-methylarginine modification. 2 positions are modified to phosphotyrosine; by EPHA4: Tyr636 and Tyr639. Residue Arg640 is modified to Omega-N-methylarginine. The segment covering 642-657 (SFSNTPNSGYTQSQFS) has biased composition (polar residues). 2 O-linked (GlcNAc) serine glycosylation sites follow: Ser644 and Ser649. Tyr651, Tyr662, Tyr665, and Tyr670 each carry phosphotyrosine; by EPHA4. Composition is skewed to low complexity over residues 676–686 (RGSGQSGPRGA) and 697–709 (NRGMPQMNTQQVN). An Asymmetric dimethylarginine; alternate modification is found at Arg698. Arg698 is subject to Omega-N-methylarginine; alternate.

It belongs to the caprin family. As to quaternary structure, may form homomultimers. Interacts with G3BP1; interaction is direct and promotes stress granule formation. Interacts with G3BP2; interaction is direct and promotes stress granule formation. Interacts with PQBP1. Interacts with DDX3X. Interacts (when phosphorylated by EPHA4) with FMR1; interaction with FMR1 promotes formation of a membraneless compartment. (Microbial infection) Interacts with Zika virus capsid protein C; this interaction is probably linked to the inhibition of stress granules formation by the virus. In terms of assembly, (Microbial infection) Interacts with rotavirus A non-structural protein 5; this interaction probably plays a role in the sequestration of CAPRIN1 in viral factories. As to quaternary structure, (Microbial infection) Interacts with Japanese encephalitis virus capsid protein C; this interaction is involved in the suppression of the integrated stress response by the virus. In terms of processing, tyrosine phosphorylation by EPHA4 promotes interaction with FMR1 and liquid-liquid phase separation (LLPS) for the formation of a membraneless compartment that concentrates mRNAs with associated regulatory factors. Post-translationally, O-glycosylated (O-GlcNAcylated), in a cell cycle-dependent manner. O-glycosylation by OGT inhibit ability to undergo liquid-liquid phase separation (LLPS). In terms of tissue distribution, ubiquitous.

It is found in the cytoplasm. Its subcellular location is the cytoplasmic ribonucleoprotein granule. The protein resides in the cytosol. The protein localises to the cell projection. It localises to the dendrite. It is found in the lamellipodium. Its activity is regulated as follows. Ability to mediate liquid-liquid phase separation is regulated by ATP: moderate concentrations of ATP enhance phase separation, whereas high concentrations of ATP lead to inhibition of phase separation. Its function is as follows. mRNA-binding protein that acts as a regulator of mRNAs transport, translation and/or stability, and which is involved in neurogenesis, synaptic plasticity in neurons and cell proliferation and migration in multiple cell types. Plays an essential role in cytoplasmic stress granule formation. Acts as an mRNA regulator by mediating formation of some phase-separated membraneless compartment: undergoes liquid-liquid phase separation upon binding to target mRNAs, leading to assemble mRNAs into cytoplasmic ribonucleoprotein granules that concentrate mRNAs with associated regulatory factors. Undergoes liquid-liquid phase separation following phosphorylation and interaction with FMR1, promoting formation of cytoplasmic ribonucleoprotein granules that concentrate mRNAs with factors that inhibit translation and mediate deadenylation of target mRNAs. In these cytoplasmic ribonucleoprotein granules, CAPRIN1 mediates recruitment of CNOT7 deadenylase, leading to mRNA deadenylation and degradation. Binds directly and selectively to MYC and CCND2 mRNAs. In neuronal cells, directly binds to several mRNAs associated with RNA granules, including BDNF, CAMK2A, CREB1, MAP2, NTRK2 mRNAs, as well as to GRIN1 and KPNB1 mRNAs, but not to rRNAs. This is Caprin-1 from Homo sapiens (Human).